We begin with the raw amino-acid sequence, 357 residues long: Putative diaminopimelate epimerase, chloroplastic (357 aa).

A chloroplast-targeting transit peptide spans 1-47 (MSSATAAATATIAAAAAAAAKLAATPAPAPSRRRLTLRGNPTARRCV). Residues cysteine 145 and cysteine 300 contribute to the active site.

This sequence belongs to the diaminopimelate epimerase family.

It localises to the plastid. It is found in the chloroplast. It catalyses the reaction (2S,6S)-2,6-diaminopimelate = meso-2,6-diaminopimelate. It functions in the pathway amino-acid biosynthesis; L-lysine biosynthesis via DAP pathway; DL-2,6-diaminopimelate from LL-2,6-diaminopimelate: step 1/1. In Oryza sativa subsp. indica (Rice), this protein is Putative diaminopimelate epimerase, chloroplastic (DAPF).